A 276-amino-acid polypeptide reads, in one-letter code: Undecaprenyl-diphosphatase (276 aa).

A run of 8 helical transmembrane segments spans residues methionine 1 to valine 21, alanine 39 to phenylalanine 59, tyrosine 84 to leucine 104, leucine 115 to phenylalanine 135, leucine 159 to glycine 179, phenylalanine 190 to alanine 210, glutamine 222 to leucine 242, and phenylalanine 253 to valine 273.

Belongs to the UppP family.

The protein localises to the cell membrane. The catalysed reaction is di-trans,octa-cis-undecaprenyl diphosphate + H2O = di-trans,octa-cis-undecaprenyl phosphate + phosphate + H(+). In terms of biological role, catalyzes the dephosphorylation of undecaprenyl diphosphate (UPP). Confers resistance to bacitracin. In Mycobacterium sp. (strain KMS), this protein is Undecaprenyl-diphosphatase.